Here is a 152-residue protein sequence, read N- to C-terminus: Deoxyuridine 5'-triphosphate nucleotidohydrolase (152 aa).

Substrate contacts are provided by residues 71–73 (RSG), Asn-84, and 88–90 (LID).

It belongs to the dUTPase family. The cofactor is Mg(2+).

The enzyme catalyses dUTP + H2O = dUMP + diphosphate + H(+). The protein operates within pyrimidine metabolism; dUMP biosynthesis; dUMP from dCTP (dUTP route): step 2/2. Functionally, this enzyme is involved in nucleotide metabolism: it produces dUMP, the immediate precursor of thymidine nucleotides and it decreases the intracellular concentration of dUTP so that uracil cannot be incorporated into DNA. This chain is Deoxyuridine 5'-triphosphate nucleotidohydrolase, found in Xanthomonas campestris pv. campestris (strain 8004).